Consider the following 147-residue polypeptide: TRAF-interacting protein with FHA domain-containing protein B (147 aa).

Residues 36–108 (LLVGRGQNTH…LGTINRISFS (73 aa)) form the FHA domain.

As to quaternary structure, interacts with TIFA. In terms of tissue distribution, expressed at high levels in spleen and at moderate levels in lung, thymus, and small intestine.

Its function is as follows. Inhibits TIFA-mediated TRAF6 activation possibly by inducing a conformational change in TIFA. The polypeptide is TRAF-interacting protein with FHA domain-containing protein B (Mus musculus (Mouse)).